We begin with the raw amino-acid sequence, 300 residues long: Protoheme IX farnesyltransferase (300 aa).

The next 9 helical transmembrane spans lie at 24 to 44, 46 to 66, 99 to 119, 122 to 142, 145 to 165, 176 to 196, 220 to 240, 244 to 264, and 275 to 295; these read GLAI…IHEF, LETI…VGAS, AFTI…MINP, AMFG…LKTV, LSVF…WVAA, LFLI…WFLF, IVLY…GYTG, LTPV…VYAI, and AKTL…VYIL.

The protein belongs to the UbiA prenyltransferase family. Protoheme IX farnesyltransferase subfamily.

The protein localises to the cell inner membrane. It carries out the reaction heme b + (2E,6E)-farnesyl diphosphate + H2O = Fe(II)-heme o + diphosphate. The protein operates within porphyrin-containing compound metabolism; heme O biosynthesis; heme O from protoheme: step 1/1. Functionally, converts heme B (protoheme IX) to heme O by substitution of the vinyl group on carbon 2 of heme B porphyrin ring with a hydroxyethyl farnesyl side group. In Flavobacterium psychrophilum (strain ATCC 49511 / DSM 21280 / CIP 103535 / JIP02/86), this protein is Protoheme IX farnesyltransferase.